The primary structure comprises 552 residues: Mothers against decapentaplegic homolog 4 (552 aa).

A mediates interaction with ZBTB7A region spans residues 1-322 (MDNMSITNTP…PISNHPAPEY (322 aa)). Residues 18–142 (SIVHSLMCHR…YERVVSPGID (125 aa)) enclose the MH1 domain. Lys37 carries the N6-acetyllysine modification. The tract at residues 44 to 69 (VKKLKEKKDELDSLITAITTNGAHPS) is required for interaction with TSC22D1. Residue Cys71 participates in Zn(2+) binding. A Glycyl lysine isopeptide (Lys-Gly) (interchain with G-Cter in SUMO2) cross-link involves residue Lys113. Cys115, Cys127, and His132 together coordinate Zn(2+). Disordered regions lie at residues 168 to 194 (GQPSLSTEGHSIQTIQHPPSNRASTET) and 236 to 256 (GLLQIASGPQPGQQQNGFTGQ). 2 stretches are compositionally biased toward polar residues: residues 170–194 (PSLSTEGHSIQTIQHPPSNRASTET) and 245–256 (QPGQQQNGFTGQ). Positions 275-320 (PYTPNLPHHQNGHLQHHPPMPPHPGHYWPVHNELAFQPPISNHPAP) are SAD. An MH2 domain is found at 323–552 (WCSIAYFEMD…MPIADPQPLD (230 aa)). N6-acetyllysine occurs at positions 428 and 507. Lys519 is covalently cross-linked (Glycyl lysine isopeptide (Lys-Gly) (interchain with G-Cter in ubiquitin)).

It belongs to the dwarfin/SMAD family. Monomer; in the absence of TGF-beta activation. Heterotrimer; on TGF-beta activation. Heterotrimer composed of two molecules of a C-terminally phosphorylated R-SMAD molecule, SMAD2 or SMAD3, and one molecule of SMAD4 to form the transcriptional active SMAD2/SMAD3-SMAD4 complex. Found in a ternary complex composed of SMAD4, STK11/LKB1 and STK11IP. Found in a complex with SMAD1 and YY1. Identified in a complex that contains at least ZNF451, SMAD2, SMAD3 and SMAD4. Interacts with ATF2, COPS5, DACH1, MSG1, SKI, STK11/LKB1, STK11IP and TRIM33. Associates with ZNF423 or ZNF521 in response to BMP2 leading to activate transcription of BMP target genes. Interacts with USP9X. Interacts (via the MH1 and MH2 domains) with RBPMS. Interacts with WWTR1 (via coiled-coil domain). Interacts with CITED1 and CITED2. Interacts with PDPK1 (via PH domain). Interacts with VPS39; this interaction affects heterodimer formation with SMAD3, but not with SMAD2, and leads to inhibition of SMAD3-dependent transcription activation. Interactions with VPS39 and SMAD2 may be mutually exclusive. Interacts (via MH2 domain) with ZNF451 (via N-terminal zinc-finger domains). Interacts with ZC3H3. Interacts weakly with ZNF8. Interacts with NUP93 and IPO7; translocates SMAD4 to the nucleus through the NPC upon BMP7 stimulation resulting in activation of SMAD4 signaling. Interacts with CREB3L1, the interaction takes place upon TGFB1 induction and SMAD4 acts as a CREB3L1 coactivator to induce the expression of genes involved in the assembly of collagen extracellular matrix. Interacts with DLX1. Interacts with ZBTB7A; the interaction is direct and stimulated by TGFB1. Interacts with CREBBP; the recruitment of this transcriptional coactivator is negatively regulated by ZBTB7A. Interacts with EP300; the interaction with this transcriptional coactivator is negatively regulated by ZBTB7A. Interacts with HDAC1. Interacts (via MH2 domain) with ZMIZ1 (via SP-RING-type domain); in the TGF-beta signaling pathway increases the activity of the SMAD3/SMAD4 transcriptional complex. Interacts (via N-terminus) with TSC22D1. Post-translationally, phosphorylated by PDPK1. In terms of processing, monoubiquitinated on Lys-519 by E3 ubiquitin-protein ligase TRIM33. Monoubiquitination hampers its ability to form a stable complex with activated SMAD2/3 resulting in inhibition of TGF-beta/BMP signaling cascade. Deubiquitination by USP9X restores its competence to mediate TGF-beta signaling.

Its subcellular location is the cytoplasm. It localises to the nucleus. Its function is as follows. In muscle physiology, plays a central role in the balance between atrophy and hypertrophy. When recruited by MSTN, promotes atrophy response via phosphorylated SMAD2/4. MSTN decrease causes SMAD4 release and subsequent recruitment by the BMP pathway to promote hypertrophy via phosphorylated SMAD1/5/8. Acts synergistically with SMAD1 and YY1 in bone morphogenetic protein (BMP)-mediated cardiac-specific gene expression. Binds to SMAD binding elements (SBEs) (5'-GTCT/AGAC-3') within BMP response element (BMPRE) of cardiac activating regions. Common SMAD (co-SMAD) is the coactivator and mediator of signal transduction by TGF-beta (transforming growth factor). Component of the heterotrimeric SMAD2/SMAD3-SMAD4 complex that forms in the nucleus and is required for the TGF-mediated signaling. Promotes binding of the SMAD2/SMAD4/FAST-1 complex to DNA and provides an activation function required for SMAD1 or SMAD2 to stimulate transcription. Component of the multimeric SMAD3/SMAD4/JUN/FOS complex which forms at the AP1 promoter site; required for synergistic transcriptional activity in response to TGF-beta. May act as a tumor suppressor. Positively regulates PDPK1 kinase activity by stimulating its dissociation from the 14-3-3 protein YWHAQ which acts as a negative regulator. In Homo sapiens (Human), this protein is Mothers against decapentaplegic homolog 4 (SMAD4).